The chain runs to 89 residues: Small ribosomal subunit protein uS15 (89 aa).

It belongs to the universal ribosomal protein uS15 family. As to quaternary structure, part of the 30S ribosomal subunit. Forms a bridge to the 50S subunit in the 70S ribosome, contacting the 23S rRNA.

One of the primary rRNA binding proteins, it binds directly to 16S rRNA where it helps nucleate assembly of the platform of the 30S subunit by binding and bridging several RNA helices of the 16S rRNA. In terms of biological role, forms an intersubunit bridge (bridge B4) with the 23S rRNA of the 50S subunit in the ribosome. In Ureaplasma parvum serovar 3 (strain ATCC 27815 / 27 / NCTC 11736), this protein is Small ribosomal subunit protein uS15.